Here is a 313-residue protein sequence, read N- to C-terminus: PDCD10 and GCKIII kinases-associated protein 1 (313 aa).

The disordered stretch occupies residues 40–89 (RLKGTQNSEVEVPRNALHDGSLSNSESRGSTTGLPHQGPLPQEDSEERPC). Residues Ser60 and Ser64 each carry the phosphoserine modification. Residues 60–73 (SLSNSESRGSTTGL) show a composition bias toward polar residues. Phosphothreonine is present on Thr104. Ser107, Ser237, and Ser240 each carry phosphoserine. Residues 253 to 286 (YFKEEGPTHPTPAADSGSEREDPHTYNGDREGVV) form a disordered region. Residues 269 to 285 (GSEREDPHTYNGDREGV) show a composition bias toward basic and acidic residues.

Interacts with KEAP1; this interaction prevents the ubiquitination of KEAP1 by TRIM25, thus protecting KEAP1 from degradation. Found in association with PDCD10 and members of the STE20 kinases, such as STK24, STK25 and STK26.

The protein resides in the cell membrane. In terms of biological role, acts as a tumor suppressor. Acts as a tumor suppressor for colorectal cancer cell proliferation by targeting KEAP1/USP17/ELK1/CDK6 axis. This Mus musculus (Mouse) protein is PDCD10 and GCKIII kinases-associated protein 1.